The sequence spans 953 residues: Homeobox protein LUMINIDEPENDENS (953 aa).

Residues 63–123 (KIGKRPRDLL…VTQKTRVRKQ (61 aa)) constitute a DNA-binding region (homeobox). Positions 404–430 (EQPGQKAAGKSPQTVRIGTSGRSRPMS) are disordered. Polar residues predominate over residues 414–425 (SPQTVRIGTSGR). Repeat copies occupy residues 498–502 (QPVNG), 507–511 (QPVNG), 516–520 (QPVNG), 525–529 (QPVNG), and 534–538 (QPVNG). The interval 498–538 (QPVNGFSTIQPVNGPSAVQPVNGPLAVQPVNGPSALQPVNG) is 5 X 5 AA repeats of Q-P-V-N-G. Disordered stretches follow at residues 606-668 (NSKE…EPQD), 733-763 (APNS…NPGM), and 861-953 (VGQM…KRWR). Over residues 608-623 (KEADVQRNRNRRERET) the composition is skewed to basic and acidic residues. Residues 651-661 (PEIPSQQPPEE) show a composition bias toward low complexity. Polar residues predominate over residues 733–742 (APNSSSSSNK). A compositionally biased stretch (low complexity) spans 869–884 (SSSWRSQQSQNSYYSH). Composition is skewed to polar residues over residues 888–934 (EIAS…QQQA) and 942–953 (THPYWNQNKRWR).

Interacts with SUF4. As to expression, expressed in shoot apex, root apex, leaf primordia and floral buds.

The protein localises to the nucleus. Seems to play a role in the regulation of flowering time in the autonomous flowering pathway by repressing FLOWERING LOCUS C expression. The chain is Homeobox protein LUMINIDEPENDENS (LD) from Arabidopsis thaliana (Mouse-ear cress).